Reading from the N-terminus, the 506-residue chain is L-amino-acid oxidase (506 aa).

The first 18 residues, 1 to 18 (MNVFFTFSLLFLAALGSC), serve as a signal peptide directing secretion. A disulfide bond links Cys-28 and Cys-191. Residue Glu-36 participates in Zn(2+) binding. FAD is bound by residues 61–62 (MS), Ser-62, 81–82 (EA), Arg-89, and 105–108 (GPMR). Arg-108 lines the substrate pocket. Positions 111, 118, and 150 each coordinate Zn(2+). An N-linked (GlcNAc...) asparagine glycan is attached at Asn-190. Asp-219 provides a ligand contact to Zn(2+). A substrate-binding site is contributed by His-241. Glu-248 provides a ligand contact to Zn(2+). Val-279 contributes to the FAD binding site. Residues Glu-299 and His-332 each coordinate Zn(2+). Cysteines 349 and 430 form a disulfide. A substrate-binding site is contributed by Tyr-390. Residue His-458 coordinates Zn(2+). FAD is bound by residues Glu-475 and 482 to 487 (GWIDST). A substrate-binding site is contributed by 482–483 (GW).

It belongs to the flavin monoamine oxidase family. FIG1 subfamily. As to quaternary structure, homodimer; non-covalently linked. Stabilized by a single zinc-binding site located at the dimer interface (Asp-219, His-332 and His-458). Other zinc-bind sites can be understood as transient and non-specific, and appear due to the high concentration of zinc ions used in the crystallization experiments. FAD serves as cofactor. Expressed by the venom gland.

The protein localises to the secreted. The enzyme catalyses an L-alpha-amino acid + O2 + H2O = a 2-oxocarboxylate + H2O2 + NH4(+). It catalyses the reaction L-leucine + O2 + H2O = 4-methyl-2-oxopentanoate + H2O2 + NH4(+). The catalysed reaction is L-phenylalanine + O2 + H2O = 3-phenylpyruvate + H2O2 + NH4(+). It carries out the reaction L-tryptophan + O2 + H2O = indole-3-pyruvate + H2O2 + NH4(+). The enzyme catalyses L-methionine + O2 + H2O = 4-methylsulfanyl-2-oxobutanoate + H2O2 + NH4(+). It catalyses the reaction L-isoleucine + O2 + H2O = (S)-3-methyl-2-oxopentanoate + H2O2 + NH4(+). The catalysed reaction is L-tyrosine + O2 + H2O = 3-(4-hydroxyphenyl)pyruvate + H2O2 + NH4(+). In terms of biological role, catalyzes an oxidative deamination of predominantly hydrophobic and aromatic L-amino acids, thus producing hydrogen peroxide that may contribute to the diverse toxic effects of this enzyme. Shows high catalytic activity against L-Met, L-Leu, L-Phe, L-Trp, L-Tyr, L-Ile. Shows no or weak activity on L-Cys, L-Val, L-Gln, L-Thr, L-Ser, L-Lys, L-Arg, L-Asn, L-Glu, L-Gly, L-Pro, L-Asp and L-His. Induces platelet aggregation in platelet-rich plasma, probably due to hydrogen peroxide production, since catalase inhibits aggregation effect. Induces moderate mouse paw edema. Induces apoptosis and shows cytotoxicity against several cancer cell lines, which is inhibited by catalase. Shows hemolytic activity and antibacterial activities against both Gram-positive and Gram-negative bacteria. Has parasiticidal activities against both trypanosomes and leishmania, as a result of enzyme-catalyzed hydrogen peroxide production. Unlike other snake venom L-amino acid oxidases, does not induce hemorrhage (with 50 ug of enzyme). In Bothrops atrox (Barba amarilla), this protein is L-amino-acid oxidase.